The following is a 493-amino-acid chain: Neuronal acetylcholine receptor subunit alpha-6 (493 aa).

An N-terminal signal peptide occupies residues 1-30 (MLNGWGRGDLRSGLCLWICGFLAFFKGSRG). The Extracellular segment spans residues 31 to 240 (CVSEEQLFHT…TYSFYIRRLP (210 aa)). Residues asparagine 54 and asparagine 171 are each glycosylated (N-linked (GlcNAc...) asparagine). 2 disulfide bridges follow: cysteine 158–cysteine 172 and cysteine 222–cysteine 223. The next 3 membrane-spanning stretches (helical) occupy residues 241–265 (MFYT…FYLP), 272–290 (VTLC…LVIT), and 306–327 (YLLF…VLNI). At 328–464 (HYRTPATHTM…WKYMAMVVDR (137 aa)) the chain is on the cytoplasmic side. Serine 401 carries the post-translational modification Phosphoserine. The chain crosses the membrane as a helical span at residues 465-484 (VFLWVFIIVCVFGTVGLFLQ).

The protein belongs to the ligand-gated ion channel (TC 1.A.9) family. Acetylcholine receptor (TC 1.A.9.1) subfamily. Alpha-6/CHRNA6 sub-subfamily. As to quaternary structure, neuronal AChR is composed of two different types of subunits: alpha and non-alpha (beta). CHRNA6/alpha-6 subunit can be combined to CHRNB2/beta-2 and CHRNA4/alpha-4 to give rise to functional receptors. Interacts with LYPD6. In terms of tissue distribution, predominantly expressed in only a few brain areas, including dopaminergic neurons, norepirephrine neurons and cells of the visual system.

The protein localises to the synaptic cell membrane. The enzyme catalyses Ca(2+)(in) = Ca(2+)(out). It carries out the reaction K(+)(in) = K(+)(out). The catalysed reaction is Na(+)(in) = Na(+)(out). With respect to regulation, activated by a myriad of ligands such as acetylcholine, cytisine and nicotine. CHRNA6 nAChR activity is inhibited by the antagonists alpha-conotoxin MII and PIA, a small disulfide-constrained peptides from cone snails. Functionally, component of neuronal acetylcholine receptors (nAChRs) that function as pentameric, ligand-gated cation channels with high calcium permeability among other activities. nAChRs are excitatory neurotrasnmitter receptors formed by a collection of nAChR subunits known to mediate synaptic transmission in the nervous system and the neuromuscular junction. Each nAchR subunit confers differential attributes to channel properties, including activation, deactivation and desensitization kinetics, pH sensitivity, cation permeability, and binding to allosteric modulators. CHRNA6 forms pentameric channels with CHRNB2 and CHRNA4 that exhibit high sensitivity to ACh and nicotine and are predominantly expressed in only a few brain areas, including dopaminergic neurons, norepirephrine neurons and cells of the visual system. nAChrs containing CHRNA6 subunits mediate endogenous cholinergic modulation of dopamine and gamma-aminobutyric acid (GABA) release in response to nicotine at nerve terminals. The protein is Neuronal acetylcholine receptor subunit alpha-6 (Chrna6) of Rattus norvegicus (Rat).